Reading from the N-terminus, the 124-residue chain is Putative outer membrane protein TC_0858 (124 aa).

Residues 1–31 form the signal peptide; that stretch reads MGKTKKRKQSITLIEMMVVITLIGIISGALA.

It localises to the cell outer membrane. The polypeptide is Putative outer membrane protein TC_0858 (Chlamydia muridarum (strain MoPn / Nigg)).